The primary structure comprises 282 residues: Acetylglutamate kinase (282 aa).

Substrate contacts are provided by residues 62–63, arginine 84, and asparagine 178; that span reads GG.

It belongs to the acetylglutamate kinase family. ArgB subfamily.

The protein localises to the cytoplasm. It catalyses the reaction N-acetyl-L-glutamate + ATP = N-acetyl-L-glutamyl 5-phosphate + ADP. Its pathway is amino-acid biosynthesis; L-arginine biosynthesis; N(2)-acetyl-L-ornithine from L-glutamate: step 2/4. Catalyzes the ATP-dependent phosphorylation of N-acetyl-L-glutamate. The sequence is that of Acetylglutamate kinase from Thermotoga sp. (strain RQ2).